Here is a 348-residue protein sequence, read N- to C-terminus: Phenylalanine--tRNA ligase alpha subunit (348 aa).

Glu-259 lines the Mg(2+) pocket.

It belongs to the class-II aminoacyl-tRNA synthetase family. Phe-tRNA synthetase alpha subunit type 1 subfamily. Tetramer of two alpha and two beta subunits. It depends on Mg(2+) as a cofactor.

It is found in the cytoplasm. It catalyses the reaction tRNA(Phe) + L-phenylalanine + ATP = L-phenylalanyl-tRNA(Phe) + AMP + diphosphate + H(+). The protein is Phenylalanine--tRNA ligase alpha subunit of Ligilactobacillus salivarius (strain UCC118) (Lactobacillus salivarius).